Consider the following 306-residue polypeptide: Elongation factor Ts (306 aa).

The tract at residues 80–83 is involved in Mg(2+) ion dislocation from EF-Tu; it reads TDFV.

It belongs to the EF-Ts family.

It is found in the cytoplasm. Associates with the EF-Tu.GDP complex and induces the exchange of GDP to GTP. It remains bound to the aminoacyl-tRNA.EF-Tu.GTP complex up to the GTP hydrolysis stage on the ribosome. The sequence is that of Elongation factor Ts from Methylorubrum populi (strain ATCC BAA-705 / NCIMB 13946 / BJ001) (Methylobacterium populi).